Consider the following 293-residue polypeptide: Probable E3 ubiquitin-protein ligase RNF144A-B (293 aa).

Positions 16–237 are TRIAD supradomain; it reads PLLSCKLCLG…YDKGPCRNKL (222 aa). Residues Cys20, Cys23, Cys43, Cys46, Cys111, Cys116, Cys135, Cys138, Cys143, Cys146, His151, Cys156, Cys186, and Cys189 each contribute to the Zn(2+) site. The segment at 20 to 70 adopts an RING-type 1 zinc-finger fold; that stretch reads CKLCLGEFPLEQMTTISQCQCIFCSLCLKQYVELLIKEGLETAISCPDSAC. The segment at 91–156 adopts an IBR-type zinc-finger fold; that stretch reads QHYKRLQFER…RADCHTGQAC (66 aa). The segment at 186-215 adopts an RING-type 2; atypical zinc-finger fold; sequence CPKCKVYIERDEGCAQMMCKNCKHAFCWYC. Cys199 is a catalytic residue. Zn(2+) contacts are provided by Cys204, Cys207, Cys212, Cys215, His227, and Cys233. The chain crosses the membrane as a helical span at residues 251–271; it reads VVGIFAGFGLLLLVASPFLLL.

It belongs to the RBR family. RNF144 subfamily.

It localises to the membrane. The enzyme catalyses [E2 ubiquitin-conjugating enzyme]-S-ubiquitinyl-L-cysteine + [acceptor protein]-L-lysine = [E2 ubiquitin-conjugating enzyme]-L-cysteine + [acceptor protein]-N(6)-ubiquitinyl-L-lysine.. It functions in the pathway protein modification; protein ubiquitination. E3 ubiquitin-protein ligase which accepts ubiquitin from E2 ubiquitin-conjugating enzymes ube2l3 and ube2l6 in the form of a thioester and then directly transfers the ubiquitin to targeted substrates. The polypeptide is Probable E3 ubiquitin-protein ligase RNF144A-B (rnf144ab) (Danio rerio (Zebrafish)).